Here is a 253-residue protein sequence, read N- to C-terminus: Regulatory protein VirG (253 aa).

Residues 15-129 (HVLVIDDDVA…EFLARIRVAL (115 aa)) form the Response regulatory domain. At aspartate 64 the chain carries 4-aspartylphosphate. Residues 141 to 241 (RRSFSFADWT…ARGAGYFFDA (101 aa)) constitute a DNA-binding region (ompR/PhoB-type).

Phosphorylated by wide host range (WHR) VirA protein.

Its subcellular location is the cytoplasm. VirG is required for the positive regulation of at least two vir loci encoded by the Ti plasmid of A.tumefaciens. This Agrobacterium fabrum (strain C58 / ATCC 33970) (Agrobacterium tumefaciens (strain C58)) protein is Regulatory protein VirG (virG).